A 316-amino-acid chain; its full sequence is Biotin synthase (316 aa).

The Radical SAM core domain maps to 36–260 (NKIQISMLLN…LMPKSYIRLA (225 aa)). Cysteine 51, cysteine 55, and cysteine 58 together coordinate [4Fe-4S] cluster. Residues cysteine 95, cysteine 126, cysteine 186, and arginine 258 each coordinate [2Fe-2S] cluster.

Belongs to the radical SAM superfamily. Biotin synthase family. As to quaternary structure, homodimer. Requires [4Fe-4S] cluster as cofactor. It depends on [2Fe-2S] cluster as a cofactor.

The enzyme catalyses (4R,5S)-dethiobiotin + (sulfur carrier)-SH + 2 reduced [2Fe-2S]-[ferredoxin] + 2 S-adenosyl-L-methionine = (sulfur carrier)-H + biotin + 2 5'-deoxyadenosine + 2 L-methionine + 2 oxidized [2Fe-2S]-[ferredoxin]. The protein operates within cofactor biosynthesis; biotin biosynthesis; biotin from 7,8-diaminononanoate: step 2/2. Functionally, catalyzes the conversion of dethiobiotin (DTB) to biotin by the insertion of a sulfur atom into dethiobiotin via a radical-based mechanism. The chain is Biotin synthase from Lawsonia intracellularis (strain PHE/MN1-00).